The sequence spans 31 residues: Nemertide alpha-7 (31 aa).

3 cysteine pairs are disulfide-bonded: cysteine 2–cysteine 16, cysteine 9–cysteine 20, and cysteine 15–cysteine 26. 4-hydroxyproline is present on proline 29.

Belongs to the nemertide family. As to expression, confined to the epidermis and to the mucus layer.

Its subcellular location is the secreted. Functionally, potent toxin, demonstrating strong inhibitory effects on insect sodium channels (Nav) and reduced activity on mammalian sodium channels. Potently inhibits inactivation of insect sodium channels of B.germanica (BgNav1) (EC(50)=9.5 nM). The toxin also delays the inactivation of most mammalian Nav (human Nav1.1/SCN1A; EC(50)=171.5 nM, rat Nav1.2/SCN2A; EC(50)=50.4 nM, rat Nav1.3/SCN3A; EC(50)=170.2 nM, rat Nav1.4/SCN4A; EC(50)=810.6 nM, human Nav1.5/SCN5A; EC(50)=155.6 nM, mouse Nav1.6/SCN8A; EC(50)=147.6 nM, human Nav1.9/SCN9A; EC(50)=129 nM). Inactivation is completely prevented by a concentration of 1 uM, resulting in sustained, non-inactivating currents. In addition, the toxin significantly enhances the recovery from inactivation, and the open state is not required for the toxin to interact with the channel. In vivo, injection into brine shrimp (Artemia salina) stops movement or causes death after 24 hours (EC(50)=6.1 uM). The protein is Nemertide alpha-7 of Lineus ruber (Red bootlace).